The sequence spans 447 residues: Glutamyl-tRNA(Gln) amidotransferase subunit A (447 aa).

Catalysis depends on charge relay system residues Lys50 and Ser125. Ser149 acts as the Acyl-ester intermediate in catalysis.

This sequence belongs to the amidase family. GatA subfamily. Heterotrimer of A, B and C subunits.

The catalysed reaction is L-glutamyl-tRNA(Gln) + L-glutamine + ATP + H2O = L-glutaminyl-tRNA(Gln) + L-glutamate + ADP + phosphate + H(+). Allows the formation of correctly charged Gln-tRNA(Gln) through the transamidation of misacylated Glu-tRNA(Gln) in organisms which lack glutaminyl-tRNA synthetase. The reaction takes place in the presence of glutamine and ATP through an activated gamma-phospho-Glu-tRNA(Gln). The chain is Glutamyl-tRNA(Gln) amidotransferase subunit A from Sulfurimonas denitrificans (strain ATCC 33889 / DSM 1251) (Thiomicrospira denitrificans (strain ATCC 33889 / DSM 1251)).